Here is a 348-residue protein sequence, read N- to C-terminus: AT-hook motif nuclear-localized protein 9 (348 aa).

Positions 18-156 (HRGLSGSGPP…MASVGELMPS (139 aa)) are disordered. Polar residues predominate over residues 31 to 46 (GSPQQQQGLRHLPNQN). Over residues 47–60 (SPFGSGSTGFGSPS) the composition is skewed to low complexity. The Bipartite nuclear localization signal signature appears at 98 to 106 (KRKRGRPRK). The segment at residues 98-110 (KRKRGRPRKYGQD) is a DNA-binding region (a.T hook 1). Residues 112 to 131 (SVSLALSSSSVSTITPNNSN) are compositionally biased toward low complexity. A DNA-binding region (a.T hook 2) is located at residues 132 to 144 (KRGRGRPPGSGKK). A PPC domain is found at 157–299 (SSGMSFTPHV…EEEASEVVQE (143 aa)).

It is found in the nucleus. Functionally, transcription factor that specifically binds AT-rich DNA sequences related to the nuclear matrix attachment regions (MARs). The protein is AT-hook motif nuclear-localized protein 9 of Arabidopsis thaliana (Mouse-ear cress).